A 255-amino-acid chain; its full sequence is Protein N-terminal and lysine N-methyltransferase efm7 (255 aa).

The tract at residues 1-25 (MADNDFEGFGIFEEPEGFRPSTPPP) is disordered. Residues W58, 84–86 (GAG), D106, W137, and S162 contribute to the S-adenosyl-L-methionine site.

Belongs to the class I-like SAM-binding methyltransferase superfamily. EFM7 family.

Its subcellular location is the cytoplasm. Its function is as follows. S-adenosyl-L-methionine-dependent protein methyltransferase that trimethylates the N-terminal glycine 'Gly-2' of elongation factor 1-alpha, before also catalyzing the mono- and dimethylation of 'Lys-3'. This is Protein N-terminal and lysine N-methyltransferase efm7 from Schizosaccharomyces pombe (strain 972 / ATCC 24843) (Fission yeast).